Reading from the N-terminus, the 232-residue chain is Orotidine 5'-phosphate decarboxylase (232 aa).

Substrate contacts are provided by residues aspartate 13, lysine 35, 62–71 (DLKFHDIPNT), threonine 122, arginine 182, glutamine 191, glycine 211, and arginine 212. Lysine 64 (proton donor) is an active-site residue.

The protein belongs to the OMP decarboxylase family. Type 1 subfamily. Homodimer.

The enzyme catalyses orotidine 5'-phosphate + H(+) = UMP + CO2. It functions in the pathway pyrimidine metabolism; UMP biosynthesis via de novo pathway; UMP from orotate: step 2/2. Its function is as follows. Catalyzes the decarboxylation of orotidine 5'-monophosphate (OMP) to uridine 5'-monophosphate (UMP). The sequence is that of Orotidine 5'-phosphate decarboxylase from Pseudomonas fluorescens (strain SBW25).